The following is a 210-amino-acid chain: Scoloptoxin SSD558 (210 aa).

The signal sequence occupies residues 1 to 23 (MNILLPSTLFVLLMFQIIGSGMG).

Contains 3 disulfide bonds. As to expression, expressed by the venom gland.

The protein localises to the secreted. This Scolopendra dehaani (Thai centipede) protein is Scoloptoxin SSD558.